A 455-amino-acid chain; its full sequence is MLRFDYLLITALAISTVSVVMAQVPPEKQFRVLNEPGYAPYITEYDASYRFLNSPNQNFFTIPFQLMFYNTTPSAYVLALRVGTRRDMSFTRWIWDANRNNPVGDNSTLSFGRNGNLVLAELNGQVKWQTNTANKGVTGFQILPNGNMVLHDKHGKFVWQSFDHPTDTLLVGQSLKVNGVNKLVSRTSDMNGSDGPYSMVLDNKGLTMYVNKTGTPLVYGGWTDHDFRGTVTFAVTREFDNLTEPSAYELLLEPAPQPATNPGNNRRLLQVRPIGSGGGTLNLNKINYNGTISYLRLGSDGSLKAFSYFPAATYLEWEETFAFFSNYFVRQCGLPTFCGDYGYCDRGMCVGCPTPKGLLAWSDKCAPPKTTQFCSGGKGKAVNYYKIVGVEHFTGPYVNDGQGPTSVNDCKAKCDRDCKCLGYFYKEKDKKCLLAPLLGTLIKDANTSSVAYIKY.

An N-terminal signal peptide occupies residues 1-22 (MLRFDYLLITALAISTVSVVMA). The 121-residue stretch at 43–163 (TEYDASYRFL…HGKFVWQSFD (121 aa)) folds into the Bulb-type lectin domain. Residues Asn-106, Asn-191, Asn-211, Asn-241, and Asn-289 are each glycosylated (N-linked (GlcNAc...) asparagine). Residue Cys-374 is modified to S-nitrosocysteine. Positions 374-455 (CSGGKGKAVN…NTSSVAYIKY (82 aa)) constitute a PAN domain. Cystine bridges form between Cys-410/Cys-432 and Cys-414/Cys-420. Asn-446 carries N-linked (GlcNAc...) asparagine glycosylation.

It localises to the secreted. The protein resides in the cell wall. The chain is EP1-like glycoprotein 1 from Arabidopsis thaliana (Mouse-ear cress).